The primary structure comprises 290 residues: Fructose-1,6-bisphosphatase class 1 (290 aa).

Mg(2+)-binding residues include Glu78, Asp96, Leu98, and Asp99. Substrate-binding positions include 99 to 102 (DGSS), Tyr201, and Lys226. Glu232 is a Mg(2+) binding site.

It belongs to the FBPase class 1 family. Homotetramer. Requires Mg(2+) as cofactor.

The protein localises to the cytoplasm. The catalysed reaction is beta-D-fructose 1,6-bisphosphate + H2O = beta-D-fructose 6-phosphate + phosphate. The protein operates within carbohydrate biosynthesis; gluconeogenesis. The sequence is that of Fructose-1,6-bisphosphatase class 1 from Helicobacter pylori (strain HPAG1).